Reading from the N-terminus, the 87-residue chain is uncharacterized protein (87 aa).

A helical transmembrane segment spans residues F25–S47.

It is found in the membrane. This is an uncharacterized protein from Bacillus subtilis (strain 168).